We begin with the raw amino-acid sequence, 463 residues long: uncharacterized protein (463 aa).

It belongs to the UbiD family.

This is an uncharacterized protein from Rhodospirillum rubrum.